The primary structure comprises 65 residues: Photosystem II reaction center protein Z (65 aa).

2 helical membrane passes run 8–28 (AVFA…VALA) and 41–61 (YAGA…DSVV).

The protein belongs to the PsbZ family. In terms of assembly, PSII is composed of 1 copy each of membrane proteins PsbA, PsbB, PsbC, PsbD, PsbE, PsbF, PsbH, PsbI, PsbJ, PsbK, PsbL, PsbM, PsbT, PsbX, PsbY, PsbZ, Psb30/Ycf12, at least 3 peripheral proteins of the oxygen-evolving complex and a large number of cofactors. It forms dimeric complexes.

It localises to the plastid. The protein resides in the cyanelle thylakoid membrane. Functionally, may control the interaction of photosystem II (PSII) cores with the light-harvesting antenna, regulates electron flow through the 2 photosystem reaction centers. PSII is a light-driven water plastoquinone oxidoreductase, using light energy to abstract electrons from H(2)O, generating a proton gradient subsequently used for ATP formation. This Cyanophora paradoxa protein is Photosystem II reaction center protein Z.